The following is a 176-amino-acid chain: Cathelicidin-2 (176 aa).

A signal peptide spans 1 to 29 (METQRASLSLGRCSLWLLLLGLVLPSASA). Gln-30 bears the Pyrrolidone carboxylic acid mark. The propeptide occupies 30-130 (QALSYREAVL…DINCNELQSV (101 aa)). Intrachain disulfides connect Cys-85-Cys-96 and Cys-107-Cys-124. The interval 157 to 176 (IFPPIRPPFRPPLGPFPGRR) is disordered. At Pro-173 the chain carries Proline amide. Positions 174–176 (GRR) are cleaved as a propeptide — removed in mature form.

This sequence belongs to the cathelicidin family. Elastase is responsible for its maturation. Large granules of neutrophils.

It localises to the secreted. Functionally, exerts, in vitro, a potent antimicrobial activity. Probably due to an impairment of the function of the respiratory chain and of energy-dependent activities in the inner membrane of susceptible microorganisms. This is Cathelicidin-2 (CATHL2) from Bos taurus (Bovine).